Here is a 466-residue protein sequence, read N- to C-terminus: Adenosylhomocysteinase (466 aa).

Residues T57, D132, and E192 each coordinate substrate. Residue 193-195 coordinates NAD(+); that stretch reads TTT. Substrate is bound by residues K222 and D226. NAD(+) is bound by residues N227, 256–261, E279, N314, 335–337, and N380; these read GYGDVG and IGH.

This sequence belongs to the adenosylhomocysteinase family. It depends on NAD(+) as a cofactor.

The protein resides in the cytoplasm. It carries out the reaction S-adenosyl-L-homocysteine + H2O = L-homocysteine + adenosine. The protein operates within amino-acid biosynthesis; L-homocysteine biosynthesis; L-homocysteine from S-adenosyl-L-homocysteine: step 1/1. In terms of biological role, may play a key role in the regulation of the intracellular concentration of adenosylhomocysteine. The chain is Adenosylhomocysteinase from Rhizobium leguminosarum bv. trifolii (strain WSM2304).